Reading from the N-terminus, the 277-residue chain is 5'-nucleotidase SurE (277 aa).

Aspartate 16, aspartate 17, serine 48, and asparagine 101 together coordinate a divalent metal cation.

Belongs to the SurE nucleotidase family. Requires a divalent metal cation as cofactor.

It localises to the cytoplasm. The enzyme catalyses a ribonucleoside 5'-phosphate + H2O = a ribonucleoside + phosphate. Its function is as follows. Nucleotidase that shows phosphatase activity on nucleoside 5'-monophosphates. The chain is 5'-nucleotidase SurE from Parvibaculum lavamentivorans (strain DS-1 / DSM 13023 / NCIMB 13966).